A 1166-amino-acid polypeptide reads, in one-letter code: ATP-dependent helicase/deoxyribonuclease subunit B (1166 aa).

A UvrD-like helicase ATP-binding domain is found at 1–390 (MGVEFLVGRS…HPLIEFIRSS (390 aa)). Residue 8–15 (GRSGSGKT) coordinates ATP. A UvrD-like helicase C-terminal domain is found at 281-586 (TKRHQHAPEL…HFSLIPPALD (306 aa)). Cysteine 801, cysteine 1121, cysteine 1124, and cysteine 1130 together coordinate [4Fe-4S] cluster.

It belongs to the helicase family. AddB/RexB type 1 subfamily. Heterodimer of AddA and AddB. Mg(2+) serves as cofactor. [4Fe-4S] cluster is required as a cofactor.

Its function is as follows. The heterodimer acts as both an ATP-dependent DNA helicase and an ATP-dependent, dual-direction single-stranded exonuclease. Recognizes the chi site generating a DNA molecule suitable for the initiation of homologous recombination. The AddB subunit has 5' -&gt; 3' nuclease activity but not helicase activity. This chain is ATP-dependent helicase/deoxyribonuclease subunit B, found in Bacillus velezensis (strain DSM 23117 / BGSC 10A6 / LMG 26770 / FZB42) (Bacillus amyloliquefaciens subsp. plantarum).